A 434-amino-acid polypeptide reads, in one-letter code: Fc receptor-like protein 6 (434 aa).

The signal sequence occupies residues 1 to 19 (MLLWTAVLLFVPCVGKTVW). 3 consecutive Ig-like C2-type domains span residues 20-95 (LYLQ…QTFT), 111-197 (PPVL…PQLE), and 207-293 (PVLT…KKLS). The Extracellular portion of the chain corresponds to 20–307 (LYLQAWPNPV…QVLFTPASNW (288 aa)). 3 disulfide bridges follow: Cys39–Cys83, Cys132–Cys180, and Cys228–Cys276. Asn65 carries an N-linked (GlcNAc...) asparagine glycan. Asn273 carries an N-linked (GlcNAc...) asparagine glycan. The helical transmembrane segment at 308–328 (LVPWLPASLLGLMVIAAALLV) threads the bilayer. The Cytoplasmic segment spans residues 329 to 434 (YVRSWRKAGP…PLSDCEEVLC (106 aa)). An ITIM motif motif is present at residues 369–374 (VVYSVV). The residue at position 371 (Tyr371) is a Phosphotyrosine.

As to quaternary structure, interacts (tyrosine phosphorylated) with PTPN11. Interacts (tyrosine phosphorylated) with PTPN6, INPP5D, INPPL1 and GRB2. Interacts with class II MHC HLA-DR when the alpha chain is associated with a beta-1, beta-4 or a beta-5 but not a beta-3 chain. Phosphorylated on Tyr residues. Tyrosine phosphorylation induces association with phosphatase PTPN11, PTPN6, INPP5D, INPPL1 and GRB2. As to expression, expressed by cytolytic cells including NK cells, effector and effector-memory CD8(+) T-cells, and a subset of NKT cells (at protein level). Also expressed in gamma delta T cells and in a rare subset of effector CD4(+) T-cells (at protein level). Expressed in spleen, skin, peripheral blood leukocytes, liver, lung, bone marrow, small intestine and placenta. Expression among T-cells is greatly expanded in HIV-1 infected individuals, and includes not only effector and effector-memory CD8(+) T-cells but also populations of CD4(+) T-cells. Expression among CD8(+) T-cells and NK cells is expanded in individuals with chronic lymphocytic leukemia (CLL) but is reduced in PBMCs from patients with acute (AML), chronic myeloid leukemia (CML) and non-Hodgkin's lymphoma. Expression is higher in PBMCs and/or CD3(+) cells of patients with autoimmune diseases, such as rheumatoid arthritis (RA), systemic lupus erythematosus (SLE) and idiopathic thrombocytopenia purpura (ITP). In contrast, expression in CD3(+) cells from patients with lupus anticoagulans (LA) is higher.

The protein resides in the cell membrane. In terms of biological role, acts as a MHC class II receptor. When stimulated on its own, does not play a role in cytokine production or the release of cytotoxic granules by NK cells and cytotoxic CD8(+) T cells. Does not act as an Fc receptor. In Homo sapiens (Human), this protein is Fc receptor-like protein 6 (FCRL6).